A 454-amino-acid chain; its full sequence is Zeatin O-xylosyltransferase (454 aa).

This sequence belongs to the UDP-glycosyltransferase family. In terms of tissue distribution, high level in young seeds, less in older seeds and very low in roots.

It carries out the reaction zeatin + UDP-alpha-D-xylose = O-beta-D-xylosylzeatin + UDP + H(+). Functionally, utilizes UDP-xylose as the sugar donor and catalyzes the formation of o-xylosylzeatin from zeatin. Does not act on UDP-glucose. The sequence is that of Zeatin O-xylosyltransferase from Phaseolus vulgaris (Kidney bean).